A 158-amino-acid polypeptide reads, in one-letter code: Ribosomal RNA large subunit methyltransferase H (158 aa).

Residues L73, G107, and 126–131 (FGEITL) contribute to the S-adenosyl-L-methionine site.

It belongs to the RNA methyltransferase RlmH family. In terms of assembly, homodimer.

It localises to the cytoplasm. The enzyme catalyses pseudouridine(1915) in 23S rRNA + S-adenosyl-L-methionine = N(3)-methylpseudouridine(1915) in 23S rRNA + S-adenosyl-L-homocysteine + H(+). Functionally, specifically methylates the pseudouridine at position 1915 (m3Psi1915) in 23S rRNA. This Rubrobacter xylanophilus (strain DSM 9941 / JCM 11954 / NBRC 16129 / PRD-1) protein is Ribosomal RNA large subunit methyltransferase H.